Reading from the N-terminus, the 277-residue chain is Thymidylate synthase (277 aa).

Position 21 (Arg21) interacts with dUMP. His51 is a binding site for (6R)-5,10-methylene-5,6,7,8-tetrahydrofolate. A dUMP-binding site is contributed by 139-140 (RR). Cys159 (nucleophile) is an active-site residue. DUMP contacts are provided by residues 179 to 182 (RSAD), Asn190, and 220 to 222 (HIY). Asp182 is a (6R)-5,10-methylene-5,6,7,8-tetrahydrofolate binding site. Residue Ala276 participates in (6R)-5,10-methylene-5,6,7,8-tetrahydrofolate binding.

It belongs to the thymidylate synthase family. Bacterial-type ThyA subfamily. Homodimer.

Its subcellular location is the cytoplasm. It carries out the reaction dUMP + (6R)-5,10-methylene-5,6,7,8-tetrahydrofolate = 7,8-dihydrofolate + dTMP. Its pathway is pyrimidine metabolism; dTTP biosynthesis. In terms of biological role, catalyzes the reductive methylation of 2'-deoxyuridine-5'-monophosphate (dUMP) to 2'-deoxythymidine-5'-monophosphate (dTMP) while utilizing 5,10-methylenetetrahydrofolate (mTHF) as the methyl donor and reductant in the reaction, yielding dihydrofolate (DHF) as a by-product. This enzymatic reaction provides an intracellular de novo source of dTMP, an essential precursor for DNA biosynthesis. The sequence is that of Thymidylate synthase from Roseobacter denitrificans (strain ATCC 33942 / OCh 114) (Erythrobacter sp. (strain OCh 114)).